Reading from the N-terminus, the 169-residue chain is Diuretic hormone 44 (169 aa).

The signal sequence occupies residues 1 to 18; that stretch reads MILLGILASTTIIGLTSS. Positions 19 to 96 are excised as a propeptide; the sequence is APLSSYERRD…ARRKQERDQR (78 aa). Positions 83-108 form a coiled coil; the sequence is MLELARRKQERDQRQIEENRRFLENI. At glutamine 97 the chain carries Pyrrolidone carboxylic acid. Isoleucine amide is present on isoleucine 108. A propeptide spanning residues 109–169 is cleaved from the precursor; that stretch reads GKRSVPVSDA…RVQANELRLL (61 aa).

Post-translationally, residues Ile-66 to Gly-109 may constitute another form of the DH44 peptide, which has not been detected yet. In terms of tissue distribution, expressed in brain, ventral ganglia and the retrocerebral complex (at protein level).

The protein resides in the secreted. Its function is as follows. Regulation of fluid secretion. This Camponotus floridanus (Florida carpenter ant) protein is Diuretic hormone 44.